A 352-amino-acid polypeptide reads, in one-letter code: S-adenosylmethionine:tRNA ribosyltransferase-isomerase (352 aa).

Belongs to the QueA family. Monomer.

It is found in the cytoplasm. It carries out the reaction 7-aminomethyl-7-carbaguanosine(34) in tRNA + S-adenosyl-L-methionine = epoxyqueuosine(34) in tRNA + adenine + L-methionine + 2 H(+). The protein operates within tRNA modification; tRNA-queuosine biosynthesis. Transfers and isomerizes the ribose moiety from AdoMet to the 7-aminomethyl group of 7-deazaguanine (preQ1-tRNA) to give epoxyqueuosine (oQ-tRNA). This Bacteroides fragilis (strain ATCC 25285 / DSM 2151 / CCUG 4856 / JCM 11019 / LMG 10263 / NCTC 9343 / Onslow / VPI 2553 / EN-2) protein is S-adenosylmethionine:tRNA ribosyltransferase-isomerase.